The chain runs to 479 residues: uncharacterized protein (479 aa).

The disordered stretch occupies residues 180-203; the sequence is LGGEHSDSTNTELANPSSTTTRIT. The span at 187 to 202 shows a compositional bias: polar residues; the sequence is STNTELANPSSTTTRI. Residues 240 to 462 enclose the PE-PPE domain; that stretch reads PGTTPEVVSY…LKPLVDAGYS (223 aa).

The protein belongs to the mycobacterial PPE family.

This is an uncharacterized protein from Mycobacterium tuberculosis (strain CDC 1551 / Oshkosh).